A 299-amino-acid chain; its full sequence is Ribosomal RNA small subunit methyltransferase H (299 aa).

Residues 36–38, Asp55, Asp103, and Gln110 contribute to the S-adenosyl-L-methionine site; that span reads GGH. Composition is skewed to basic and acidic residues over residues 268–282 and 289–299; these read KPVR…ENPR and RAAERIEKGGD. Residues 268–299 form a disordered region; that stretch reads KPVRPSEEEIRENPRARSGRLRAAERIEKGGD.

This sequence belongs to the methyltransferase superfamily. RsmH family.

The protein localises to the cytoplasm. The enzyme catalyses cytidine(1402) in 16S rRNA + S-adenosyl-L-methionine = N(4)-methylcytidine(1402) in 16S rRNA + S-adenosyl-L-homocysteine + H(+). In terms of biological role, specifically methylates the N4 position of cytidine in position 1402 (C1402) of 16S rRNA. The polypeptide is Ribosomal RNA small subunit methyltransferase H (Thermotoga petrophila (strain ATCC BAA-488 / DSM 13995 / JCM 10881 / RKU-1)).